The following is a 351-amino-acid chain: Methylthioribose-1-phosphate isomerase (351 aa).

Substrate contacts are provided by residues 51 to 53, Arg94, and Gln199; that span reads RGA. The active-site Proton donor is Asp240. Residue 250 to 251 coordinates substrate; it reads NK.

This sequence belongs to the eIF-2B alpha/beta/delta subunits family. MtnA subfamily. Homodimer.

It carries out the reaction 5-(methylsulfanyl)-alpha-D-ribose 1-phosphate = 5-(methylsulfanyl)-D-ribulose 1-phosphate. It functions in the pathway amino-acid biosynthesis; L-methionine biosynthesis via salvage pathway; L-methionine from S-methyl-5-thio-alpha-D-ribose 1-phosphate: step 1/6. Its function is as follows. Catalyzes the interconversion of methylthioribose-1-phosphate (MTR-1-P) into methylthioribulose-1-phosphate (MTRu-1-P). The polypeptide is Methylthioribose-1-phosphate isomerase (Bacillus cereus (strain ATCC 10987 / NRS 248)).